Here is a 274-residue protein sequence, read N- to C-terminus: Large ribosomal subunit protein uL2 (274 aa).

Disordered regions lie at residues 28-59 and 222-274; these read APYAPLLDTKSKSGGRNNNGRITTRHVGGGHK and GAAM…RRTK. A compositionally biased stretch (polar residues) spans 39–49; sequence KSGGRNNNGRI. Positions 229 to 239 are enriched in basic and acidic residues; it reads DHPHGGGEGRS.

This sequence belongs to the universal ribosomal protein uL2 family. Part of the 50S ribosomal subunit. Forms a bridge to the 30S subunit in the 70S ribosome.

Functionally, one of the primary rRNA binding proteins. Required for association of the 30S and 50S subunits to form the 70S ribosome, for tRNA binding and peptide bond formation. It has been suggested to have peptidyltransferase activity; this is somewhat controversial. Makes several contacts with the 16S rRNA in the 70S ribosome. The chain is Large ribosomal subunit protein uL2 from Marinomonas sp. (strain MWYL1).